Consider the following 243-residue polypeptide: Leucyl/phenylalanyl-tRNA--protein transferase (243 aa).

This sequence belongs to the L/F-transferase family.

The protein localises to the cytoplasm. The enzyme catalyses N-terminal L-lysyl-[protein] + L-leucyl-tRNA(Leu) = N-terminal L-leucyl-L-lysyl-[protein] + tRNA(Leu) + H(+). It carries out the reaction N-terminal L-arginyl-[protein] + L-leucyl-tRNA(Leu) = N-terminal L-leucyl-L-arginyl-[protein] + tRNA(Leu) + H(+). The catalysed reaction is L-phenylalanyl-tRNA(Phe) + an N-terminal L-alpha-aminoacyl-[protein] = an N-terminal L-phenylalanyl-L-alpha-aminoacyl-[protein] + tRNA(Phe). Functionally, functions in the N-end rule pathway of protein degradation where it conjugates Leu, Phe and, less efficiently, Met from aminoacyl-tRNAs to the N-termini of proteins containing an N-terminal arginine or lysine. The sequence is that of Leucyl/phenylalanyl-tRNA--protein transferase from Vibrio cholerae serotype O1 (strain ATCC 39315 / El Tor Inaba N16961).